Reading from the N-terminus, the 66-residue chain is UPF0150 protein AF_0072.1 (66 aa).

This sequence belongs to the UPF0150 family.

In Archaeoglobus fulgidus (strain ATCC 49558 / DSM 4304 / JCM 9628 / NBRC 100126 / VC-16), this protein is UPF0150 protein AF_0072.1.